Consider the following 367-residue polypeptide: DNA replication and repair protein RecF (367 aa).

30–37 (GANGSGKT) contributes to the ATP binding site.

It belongs to the RecF family.

The protein localises to the cytoplasm. Functionally, the RecF protein is involved in DNA metabolism; it is required for DNA replication and normal SOS inducibility. RecF binds preferentially to single-stranded, linear DNA. It also seems to bind ATP. The polypeptide is DNA replication and repair protein RecF (Pseudomonas savastanoi pv. phaseolicola (strain 1448A / Race 6) (Pseudomonas syringae pv. phaseolicola (strain 1448A / Race 6))).